The chain runs to 171 residues: S-ribosylhomocysteine lyase (171 aa).

3 residues coordinate Fe cation: His-54, His-58, and Cys-128.

Belongs to the LuxS family. Homodimer. Fe cation is required as a cofactor.

It carries out the reaction S-(5-deoxy-D-ribos-5-yl)-L-homocysteine = (S)-4,5-dihydroxypentane-2,3-dione + L-homocysteine. Its function is as follows. Involved in the synthesis of autoinducer 2 (AI-2) which is secreted by bacteria and is used to communicate both the cell density and the metabolic potential of the environment. The regulation of gene expression in response to changes in cell density is called quorum sensing. Catalyzes the transformation of S-ribosylhomocysteine (RHC) to homocysteine (HC) and 4,5-dihydroxy-2,3-pentadione (DPD). This is S-ribosylhomocysteine lyase from Serratia proteamaculans (strain 568).